The primary structure comprises 497 residues: Ankyrin repeat domain-containing protein 53 (497 aa).

Over residues M1–K10 the composition is skewed to basic residues. The interval M1–Q65 is disordered. Low complexity predominate over residues S12–S27. Basic and acidic residues predominate over residues D28–P39. ANK repeat units follow at residues K110 to L140, K144 to S177, and N181 to A210. Residues W239 to E264 adopt a coiled-coil conformation.

Interacts with PSRC1; recruited by PSRC1 to the spindle during mitosis. Post-translationally, phosphorylated during mitosis.

The protein localises to the cytoplasm. It localises to the cytoskeleton. Its subcellular location is the spindle. It is found in the spindle pole. Its function is as follows. Required for normal progression through mitosis. Involved in chromosome alignment and cytokinesis via regulation of microtubules polymerization. The chain is Ankyrin repeat domain-containing protein 53 (Ankrd53) from Mus musculus (Mouse).